The following is a 255-amino-acid chain: Putative cysteine-rich repeat secretory protein 32 (255 aa).

Positions 1-28 (MYSSYSLFKCLVCFYILGIQVLIHSVSS) are cleaved as a signal peptide. 2 Gnk2-homologous domains span residues 35-136 (YLHH…TINS) and 143-252 (YENT…LYPF).

The protein belongs to the cysteine-rich repeat secretory protein family.

Its subcellular location is the secreted. The sequence is that of Putative cysteine-rich repeat secretory protein 32 (CRRSP32) from Arabidopsis thaliana (Mouse-ear cress).